The primary structure comprises 470 residues: Aminoacyl transferase sphA (470 aa).

Residues S212, H244, and T272 each contribute to the pyridoxal 5'-phosphate site. The residue at position 275 (K275) is an N6-(pyridoxal phosphate)lysine.

Belongs to the class-II pyridoxal-phosphate-dependent aminotransferase family. BioF subfamily. In terms of assembly, homodimer. Pyridoxal 5'-phosphate serves as cofactor.

It catalyses the reaction aminomalonate + (3R)-hydroxyoctadeca-4,10-dienoyl-[ACP] = 3-oxopresphingofungin + holo-[ACP] + CO2. The protein operates within secondary metabolite biosynthesis. In terms of biological role, aminoacyl transferase; part of the gene cluster that mediates the biosynthesis of sphingofungins, bioactive molecules acting as sphingolipid inhibitors via inhibiting serine palmitoyl transferase (SPT). Within the pathway, sphA transfers aminomalonate onto the sphB product 3-hydroxyoctadeca-4,10-dienoyl-ACP to produce 3-keto-presphingofungin. The substrate specificity of sphA using only aminomalonate in Aspergillus fumigatus is responsible for the biosynthesis of sphingofungins B and C but not E and F like in Byssochlamys spectabilis. The PKS sphB does not contain any putative thioesterase domain for releasing the nascent polyketide chain and it has been suggested that aminoacyl transferases can facilitate the polyketide chain release. Sphingofungin biosynthesis starts with the PKS sphB that produces an C18 polyketide precursor 3-hydroxyoctadeca-4,10-dienoyl-ACP containing one delta-6 desaturation and one delta-12 desaturation. The aminoacyl transferase sphA uses the sphB product to produce 3-keto-presphingofungin by adding an aminomalonate molecule. SphF then reduces the C-3 ketone of 3-keto-presphingofungin which leads to presphingofungin. The cytochrome P450 monooxygenase sphH converts presphingofungin into sphingofungin B1 which is further converted to sphingofungin B by the dioxygenase sphC. SphC is also able to convert presphingofungin into sphingofungin B2. The acetyltransferase sphE acetylates sphingofungin B to produce sphingofungin C, but can also convert sphingofungin B1 into sphingofungin C1 and sphingofungin B2 into sphingofungin C2. Finally, sphingofungin C can be spontaneously converted into sphingofungin D. This is Aminoacyl transferase sphA from Aspergillus fumigatus (strain CBS 144.89 / FGSC A1163 / CEA10) (Neosartorya fumigata).